Here is a 291-residue protein sequence, read N- to C-terminus: Putative carboxymethylenebutenolidase (291 aa).

The signal sequence occupies residues 1 to 40 (MTAFDADLRSLAAQTTLSRRTVIATSLATGFALAVQPVAA). Active-site residues include Cys-170, Asp-227, and His-259.

It belongs to the dienelactone hydrolase family.

It carries out the reaction 2-(5-oxo-2,5-dihydrofuran-2-ylidene)acetate + H2O = 4-oxohex-2-enedioate + H(+). The polypeptide is Putative carboxymethylenebutenolidase (Methylorubrum extorquens (strain ATCC 14718 / DSM 1338 / JCM 2805 / NCIMB 9133 / AM1) (Methylobacterium extorquens)).